Here is a 489-residue protein sequence, read N- to C-terminus: Rhamnulokinase (489 aa).

13–17 provides a ligand contact to ATP; it reads ASSGR. A disulfide bridge connects residues cysteine 68 and cysteine 222. Residues glycine 83 and 236–238 each bind substrate; that span reads HDT. Aspartate 237 acts as the Proton acceptor in catalysis. Threonine 259 serves as a coordination point for ATP. Asparagine 296 contacts substrate. Glutamine 304 contacts ATP. Cysteine 353 and cysteine 370 form a disulfide bridge. Glycine 402 contributes to the ATP binding site. The cysteines at positions 413 and 417 are disulfide-linked.

It belongs to the rhamnulokinase family. Monomer. It depends on Mg(2+) as a cofactor.

It catalyses the reaction L-rhamnulose + ATP = L-rhamnulose 1-phosphate + ADP + H(+). It participates in carbohydrate degradation; L-rhamnose degradation; glycerone phosphate from L-rhamnose: step 2/3. Its function is as follows. Involved in the catabolism of L-rhamnose (6-deoxy-L-mannose). Catalyzes the transfer of the gamma-phosphate group from ATP to the 1-hydroxyl group of L-rhamnulose to yield L-rhamnulose 1-phosphate. This chain is Rhamnulokinase, found in Escherichia coli O139:H28 (strain E24377A / ETEC).